The chain runs to 220 residues: uncharacterized protein (220 aa).

The helical transmembrane segment at Phe20–Ile42 threads the bilayer.

Its subcellular location is the membrane. This is an uncharacterized protein from Rickettsia prowazekii (strain Madrid E).